We begin with the raw amino-acid sequence, 511 residues long: Maturase K (511 aa).

It belongs to the intron maturase 2 family. MatK subfamily.

The protein resides in the plastid. The protein localises to the chloroplast. Functionally, usually encoded in the trnK tRNA gene intron. Probably assists in splicing its own and other chloroplast group II introns. In Brachypodium distachyon (Purple false brome), this protein is Maturase K.